The sequence spans 340 residues: Alcohol dehydrogenase (340 aa).

Positions 37, 58, 89, 92, 95, 103, and 145 each coordinate Zn(2+).

Belongs to the zinc-containing alcohol dehydrogenase family. The cofactor is Zn(2+).

The catalysed reaction is a primary alcohol + NAD(+) = an aldehyde + NADH + H(+). The enzyme catalyses a secondary alcohol + NAD(+) = a ketone + NADH + H(+). The sequence is that of Alcohol dehydrogenase (adh) from Staphylococcus epidermidis (strain ATCC 35984 / DSM 28319 / BCRC 17069 / CCUG 31568 / BM 3577 / RP62A).